The primary structure comprises 952 residues: Protein translocase subunit SecA (952 aa).

Residues glutamine 135, 153-157 (GEGKT), and aspartate 575 each bind ATP. Residues 916–930 (VSAKAATQPAAPAAK) show a composition bias toward low complexity. Residues 916-952 (VSAKAATQPAAPAAKEVGRNDPCPCGSGKKYKKCCGK) form a disordered region. Zn(2+)-binding residues include cysteine 938, cysteine 940, cysteine 949, and cysteine 950.

Belongs to the SecA family. In terms of assembly, monomer and homodimer. Part of the essential Sec protein translocation apparatus which comprises SecA, SecYEG and auxiliary proteins SecDF. Other proteins may also be involved. The cofactor is Zn(2+).

It localises to the cell membrane. The protein resides in the cytoplasm. It carries out the reaction ATP + H2O + cellular proteinSide 1 = ADP + phosphate + cellular proteinSide 2.. Its function is as follows. Part of the Sec protein translocase complex. Interacts with the SecYEG preprotein conducting channel. Has a central role in coupling the hydrolysis of ATP to the transfer of proteins into and across the cell membrane, serving as an ATP-driven molecular motor driving the stepwise translocation of polypeptide chains across the membrane. In Dehalococcoides mccartyi (strain ATCC BAA-2266 / KCTC 15142 / 195) (Dehalococcoides ethenogenes (strain 195)), this protein is Protein translocase subunit SecA.